A 501-amino-acid polypeptide reads, in one-letter code: Cell division control protein 24 (501 aa).

In terms of assembly, interacts with dna2, pcn1 and rfc1.

It localises to the nucleus. The protein resides in the cytoplasm. Has a role in the progression of DNA replication and in the maintenance of genomic integrity. Acts during S phase, after initiation, where it is essential for completion. This chain is Cell division control protein 24 (cdc24), found in Schizosaccharomyces pombe (strain 972 / ATCC 24843) (Fission yeast).